The following is an 84-amino-acid chain: Protein Tlp homolog (84 aa).

The segment at 1 to 20 (MGKEERYTKKPKPDDRSDNV) is disordered.

This sequence belongs to the Tlp family.

The protein is Protein Tlp homolog of Caldanaerobacter subterraneus subsp. tengcongensis (strain DSM 15242 / JCM 11007 / NBRC 100824 / MB4) (Thermoanaerobacter tengcongensis).